The chain runs to 922 residues: MASAATTTHFPSSRIPSEPCASSGPLFPDDVLFTTEASSASSSSCHVENDSRPLSPTMFTDGRTPVNISAKHLKDHPLHEPTGTSEVLTFYPTMREFKNFSQYIKKIEQNGGHLKAGIAKIVAPEGWTPRPTRKDFSDVDDYEITQPARETIEATEKPGAYFKRNVTCRRKMPVREFRTLANSAQYRNPRPDLKGSEIEKHYFDNILHGEPIYGADTEGSFYDAQVEEWNMNRLGTILEDTNYEIKGVNTVYLYFGMYKTTFPWHAEDMDLYSINFLHFGAPKYWFAISSEHADRFERFMSQQFSYQNEYAPQCKAFLRHKTYLVTPELLRQAGIPYATMVQRPNEFIITFPRGYHMGFNLGYNLAESTNFASQRWIDYGKDAVLCDCNKDSVKIDMTHFMAKYRPDEYTTWWTYWYGGGRELWIPKKKKEVPKKRRQSLADASKIAKRARLGASSTATDSDGSSGSSGSEEATEGSSFMRALPAGYTVHNWQLRPDYDELLRKYKKETKLLRSDTRIDFYQEREFNHARRAEWPHCAVCQYFQPPHMNAINHTVPNSSRRLIPKWCFSKTDTKKHEDHHEPPPPLDRLLTCSNCHVTVHSHCCSGGGGGGGDDDDVTSSGEPWRCPRCRNRTDVEIRTTSCQLCELRGGALIPCQIGTDSTWAHVACALFNRRAIFDCPNRPGACFVEPSPRQQSETPRMPPRRLSEEYRAELGDLYENSRWECVVCHRTDEGLAPCVLCIEEQATTSLPTLAHVTCARRVGFVCEVRDYPRGVVMICHKHEHSYLVNKTTQQQAYTNVKVGDFVFVEDVVEPPQKLFTRGAIVRADKKETVVVDFLDNSCSRDNHVEDIISCECLFCENGDHQYGARVKVVWDDKQVYDAYFRGKGQMIEYTVRLEDGREVRHPRNRLKTKRELNAYLKK.

A compositionally biased stretch (polar residues) spans 1-15 (MASAATTTHFPSSRI). Disordered stretches follow at residues 1 to 21 (MASA…EPCA) and 42 to 61 (SSSC…MFTD). The region spanning 87-130 (VLTFYPTMREFKNFSQYIKKIEQNGGHLKAGIAKIVAPEGWTPR) is the JmjN domain. Residue Y213 participates in 2-oxoglutarate binding. The region spanning 223–388 (DAQVEEWNMN…YGKDAVLCDC (166 aa)) is the JmjC domain. H265 and E267 together coordinate Fe cation. Residues N275 and K283 each contribute to the 2-oxoglutarate site. Zn(2+) is bound by residues C314 and H320. Residue K321 participates in 2-oxoglutarate binding. H356 lines the Fe cation pocket. C386 and C388 together coordinate Zn(2+). The segment at 435–475 (KRRQSLADASKIAKRARLGASSTATDSDGSSGSSGSEEATE) is disordered. Residues 453–475 (GASSTATDSDGSSGSSGSEEATE) are compositionally biased toward low complexity. Residues 639–675 (TTSCQLCELRGGALIPCQIGTDSTWAHVACALFNRRA) form a C2HC pre-PHD-type zinc finger. The PHD-type; degenerate zinc finger occupies 723 to 783 (WECVVCHRTD…GVVMICHKHE (61 aa)).

This sequence belongs to the JHDM3 histone demethylase family. Fe(2+) is required as a cofactor.

The protein localises to the nucleus. It carries out the reaction N(6),N(6),N(6)-trimethyl-L-lysyl(9)-[histone H3] + 2 2-oxoglutarate + 2 O2 = N(6)-methyl-L-lysyl(9)-[histone H3] + 2 formaldehyde + 2 succinate + 2 CO2. The enzyme catalyses N(6),N(6),N(6)-trimethyl-L-lysyl(36)-[histone H3] + 2 2-oxoglutarate + 2 O2 = N(6)-methyl-L-lysyl(36)-[histone H3] + 2 formaldehyde + 2 succinate + 2 CO2. Histone demethylase that specifically demethylates 'Lys-9' and 'Lys-36' residues of histone H3, thereby playing a central role in histone code. Demethylation of Lys residue generates formaldehyde and succinate. Involved in the negative regulation of lifespan in a germline-dependent fashion. The polypeptide is Lysine-specific demethylase 4 (jmjd-2) (Caenorhabditis elegans).